The chain runs to 625 residues: DNA mismatch repair protein MutL (625 aa).

This sequence belongs to the DNA mismatch repair MutL/HexB family.

Its function is as follows. This protein is involved in the repair of mismatches in DNA. It is required for dam-dependent methyl-directed DNA mismatch repair. May act as a 'molecular matchmaker', a protein that promotes the formation of a stable complex between two or more DNA-binding proteins in an ATP-dependent manner without itself being part of a final effector complex. This is DNA mismatch repair protein MutL from Bacteroides fragilis (strain YCH46).